The primary structure comprises 953 residues: Translation initiation factor IF-2 (953 aa).

Disordered stretches follow at residues 48-240 and 279-363; these read SSFS…AQQE and TKLK…TERK. Composition is skewed to basic and acidic residues over residues 80 to 89, 98 to 111, and 140 to 188; these read TGSEHVEKTQ, FKAEREARAKEQAA, and QGDK…ENHK. Residues 191–207 show a composition bias toward polar residues; it reads RFTNQKKQGRQEPQSKS. Basic and acidic residues predominate over residues 229 to 240; the sequence is RQSETRFRAQQE. The span at 282–291 shows a compositional bias: polar residues; it reads KSSNISAKST. The span at 300-317 shows a compositional bias: basic and acidic residues; the sequence is ARPEKNRELTHHSQEGQK. Residues 322 to 338 are compositionally biased toward low complexity; sequence SWNSQNQVRNQKNSNWN. Residues 339 to 348 are compositionally biased toward basic residues; the sequence is KNKKTKKGKN. One can recognise a tr-type G domain in the interval 454–623; the sequence is ERAPVVTIMG…LLVAEVEELK (170 aa). A G1 region spans residues 463 to 470; it reads GHVDHGKT. 463–470 contributes to the GTP binding site; sequence GHVDHGKT. A G2 region spans residues 488-492; that stretch reads GITQH. A G3 region spans residues 509 to 512; the sequence is DTPG. GTP-binding positions include 509–513 and 563–566; these read DTPGH and NKID. Residues 563-566 are G4; it reads NKID. Residues 599–601 are G5; sequence SAK.

The protein belongs to the TRAFAC class translation factor GTPase superfamily. Classic translation factor GTPase family. IF-2 subfamily.

It is found in the cytoplasm. Its function is as follows. One of the essential components for the initiation of protein synthesis. Protects formylmethionyl-tRNA from spontaneous hydrolysis and promotes its binding to the 30S ribosomal subunits. Also involved in the hydrolysis of GTP during the formation of the 70S ribosomal complex. In Streptococcus pyogenes serotype M1, this protein is Translation initiation factor IF-2.